The primary structure comprises 161 residues: Cystatin cpi-2 (161 aa).

The signal sequence occupies residues 1 to 25 (MMSTMSIKEGLLVILLSLFLFDTTA). The Important for interaction with host LGMN motif lies at 76–78 (SND). N-linked (GlcNAc...) asparagine glycosylation is present at Asn89. The short motif at 93-97 (QVVAG) is the Secondary area of contact element. Cys111 and Cys124 are joined by a disulfide.

Belongs to the cystatin family.

Functionally, cysteine protease inhibitor which inhibits members of the peptidase C1 family. Also acts as an asparaginyl endopeptidase inhibitor. In the human host, inhibits CTSL/cathepsin L, CTSS/cathepsin S, CTSB/cathepsin B and asparaginyl endopeptidase LGMN/AEP which may cause defects in both antigen and MHC class II invariant chain CD74/Ii processing. The polypeptide is Cystatin cpi-2 (Brugia malayi (Filarial nematode worm)).